A 314-amino-acid polypeptide reads, in one-letter code: Methionyl-tRNA formyltransferase (314 aa).

Residue 113–116 participates in (6S)-5,6,7,8-tetrahydrofolate binding; sequence SLLP.

The protein belongs to the Fmt family.

It catalyses the reaction L-methionyl-tRNA(fMet) + (6R)-10-formyltetrahydrofolate = N-formyl-L-methionyl-tRNA(fMet) + (6S)-5,6,7,8-tetrahydrofolate + H(+). In terms of biological role, attaches a formyl group to the free amino group of methionyl-tRNA(fMet). The formyl group appears to play a dual role in the initiator identity of N-formylmethionyl-tRNA by promoting its recognition by IF2 and preventing the misappropriation of this tRNA by the elongation apparatus. This Pseudomonas aeruginosa (strain ATCC 15692 / DSM 22644 / CIP 104116 / JCM 14847 / LMG 12228 / 1C / PRS 101 / PAO1) protein is Methionyl-tRNA formyltransferase.